A 429-amino-acid chain; its full sequence is Small ribosomal subunit protein mS47 (429 aa).

Substrate contacts are provided by glutamate 141, glycine 166, glutamate 189, and aspartate 197.

This sequence belongs to the enoyl-CoA hydratase/isomerase family. Mitochondrion-specific ribosomal protein mS47 subfamily. As to quaternary structure, component of the mitochondrial small ribosomal subunit (mt-SSU). Mature yeast 74S mitochondrial ribosomes consist of a small (37S) and a large (54S) subunit. The 37S small subunit contains a 15S ribosomal RNA (15S mt-rRNA) and at least 32 different proteins. The 54S large subunit contains a 21S rRNA (21S mt-rRNA) and at least 45 different proteins. mS47/snr1 forms a protuberance of the yeast mitoribosome and retains a solvent-exposed cavity likely capable of accommodating a substrate, in accordance with it being an active enzyme as well as an integral constituent of the mitoribosome.

It localises to the mitochondrion. It catalyses the reaction 3-hydroxy-2-methylpropanoyl-CoA + H2O = 3-hydroxy-2-methylpropanoate + CoA + H(+). It participates in amino-acid degradation; L-valine degradation. Functionally, component of the mitochondrial ribosome (mitoribosome), a dedicated translation machinery responsible for the synthesis of mitochondrial genome-encoded proteins, including at least some of the essential transmembrane subunits of the mitochondrial respiratory chain. The mitoribosomes are attached to the mitochondrial inner membrane and translation products are cotranslationally integrated into the membrane. mS47/snr1 has enzymatic activity in vitro, and is able to catalyze the specific hydrolysis of 3-hydroxyisobutyryl-CoA (HIBYL-CoA). However, because the turnover rate of mS47/snr1 is only a fraction of that of the homologous mammalian enzyme, the physiological function of this activity remains unclear. Has an indirect role in endocytic membrane trafficking. This chain is Small ribosomal subunit protein mS47 (snr1), found in Schizosaccharomyces pombe (strain 972 / ATCC 24843) (Fission yeast).